A 197-amino-acid chain; its full sequence is Recombination protein RecR (197 aa).

The C4-type zinc finger occupies Cys55–Cys70. The region spanning Gln78–Pro173 is the Toprim domain.

It belongs to the RecR family.

May play a role in DNA repair. It seems to be involved in an RecBC-independent recombinational process of DNA repair. It may act with RecF and RecO. The sequence is that of Recombination protein RecR from Xanthomonas campestris pv. campestris (strain 8004).